Consider the following 536-residue polypeptide: Lysosomal acid glucosylceramidase (536 aa).

Residues 1–39 (MEFSSPSREECPKPLSRVSIMAGSLTGLLLLQAVSWASG) form the signal peptide. Cystine bridges form between Cys43/Cys55 and Cys57/Cys62. Residues Asn58, Asn98, and Asn185 are each glycosylated (N-linked (GlcNAc...) asparagine). Glu274 (proton donor) is an active-site residue. A glycan (N-linked (GlcNAc...) asparagine) is linked at Asn309. Glu379 functions as the Nucleophile in the catalytic mechanism. A glycan (N-linked (GlcNAc...) asparagine) is linked at Asn501.

It belongs to the glycosyl hydrolase 30 family. Interacts with saposin-C. Interacts with SCARB2. Interacts with TCP1. May interacts with SNCA; this interaction may inhibit the glucosylceramidase activity. Interacts with GRN; this interaction prevents aggregation of GBA1-SCARB2 complex via interaction with HSPA1A upon stress.

It is found in the lysosome membrane. It catalyses the reaction a beta-D-glucosyl-(1&lt;-&gt;1')-N-acylsphing-4-enine + H2O = an N-acylsphing-4-enine + D-glucose. The catalysed reaction is a beta-D-galactosyl-(1&lt;-&gt;1')-N-acylsphing-4-enine + H2O = an N-acylsphing-4-enine + D-galactose. The enzyme catalyses cholesteryl 3-beta-D-glucoside + H2O = cholesterol + D-glucose. It carries out the reaction a beta-D-glucosyl-(1&lt;-&gt;1')-N-acylsphing-4-enine + cholesterol = cholesteryl 3-beta-D-glucoside + an N-acylsphing-4-enine. It catalyses the reaction beta-D-glucosyl-N-(9Z-octadecenoyl)-sphing-4E-enine + cholesterol = N-(9Z-octadecenoyl)-sphing-4-enine + cholesteryl 3-beta-D-glucoside. The catalysed reaction is beta-D-glucosyl-(1&lt;-&gt;1')-N-hexadecanoylsphing-4-enine + cholesterol = cholesteryl 3-beta-D-glucoside + N-hexadecanoylsphing-4-enine. The enzyme catalyses beta-D-glucosyl-N-octanoylsphing-4E-enine + cholesterol = N-octanoylsphing-4-enine + cholesteryl 3-beta-D-glucoside. It carries out the reaction beta-D-glucosyl-N-dodecanoylsphing-4-enine + cholesterol = N-dodecanoylsphing-4-enine + cholesteryl 3-beta-D-glucoside. It catalyses the reaction beta-D-glucosyl-(1&lt;-&gt;1)-N-octadecanoylsphing-4-enine + cholesterol = N-octadecanoylsphing-4-enine + cholesteryl 3-beta-D-glucoside. The catalysed reaction is beta-D-glucosyl-(1&lt;-&gt;1')-N-(15Z-tetracosenoyl)-sphing-4-enine + cholesterol = N-(15Z-tetracosenoyl)-sphing-4-enine + cholesteryl 3-beta-D-glucoside. The enzyme catalyses a beta-D-galactosyl-(1&lt;-&gt;1')-N-acylsphing-4-enine + cholesterol = cholesteryl 3-beta-D-galactoside + an N-acylsphing-4-enine. It carries out the reaction 1-(beta-D-galactosyl)-N-dodecanoylsphing-4-enine + cholesterol = cholesteryl 3-beta-D-galactoside + N-dodecanoylsphing-4-enine. It catalyses the reaction a beta-D-xylosyl-(1&lt;-&gt;1')-N-acylsphing-4-enine + cholesterol = cholesteryl 3-beta-D-xyloside + an N-acylsphing-4-enine. The catalysed reaction is beta-D-xylosyl-(1&lt;-&gt;1')-N-(9Z-octadecenoyl)-sphing-4-enine + cholesterol = cholesteryl 3-beta-D-xyloside + N-(9Z-octadecenoyl)-sphing-4-enine. The protein operates within steroid metabolism; cholesterol metabolism. It functions in the pathway sphingolipid metabolism. With respect to regulation, synergistically activated by saposin-A and saposin-C, two saposin peptides produced by proteolytic processing of prosaposin/PSAP. Saposin-C activates GBA1 through its recruitment to membranes. The membrane structure and composition in anionic phospholipids are also important for the activation. Activated by PKC in the salvage pathway of ceramide formation. Inhibited by conduritol B epoxide/CBE. In terms of biological role, glucosylceramidase that catalyzes, within the lysosomal compartment, the hydrolysis of glucosylceramides/GlcCers (such as beta-D-glucosyl-(1&lt;-&gt;1')-N-acylsphing-4-enine) into free ceramides (such as N-acylsphing-4-enine) and glucose. Plays a central role in the degradation of complex lipids and the turnover of cellular membranes. Through the production of ceramides, participates in the PKC-activated salvage pathway of ceramide formation. Catalyzes the glucosylation of cholesterol, through a transglucosylation reaction where glucose is transferred from GlcCer to cholesterol. GlcCer containing mono-unsaturated fatty acids (such as beta-D-glucosyl-N-(9Z-octadecenoyl)-sphing-4-enine) are preferred as glucose donors for cholesterol glucosylation when compared with GlcCer containing same chain length of saturated fatty acids (such as beta-D-glucosyl-N-octadecanoyl-sphing-4-enine). Under specific conditions, may alternatively catalyze the reverse reaction, transferring glucose from cholesteryl 3-beta-D-glucoside to ceramide. Can also hydrolyze cholesteryl 3-beta-D-glucoside producing glucose and cholesterol. Catalyzes the hydrolysis of galactosylceramides/GalCers (such as beta-D-galactosyl-(1&lt;-&gt;1')-N-acylsphing-4-enine), as well as the transfer of galactose between GalCers and cholesterol in vitro, but with lower activity than with GlcCers. Contrary to GlcCer and GalCer, xylosylceramide/XylCer (such as beta-D-xyosyl-(1&lt;-&gt;1')-N-acylsphing-4-enine) is not a good substrate for hydrolysis, however it is a good xylose donor for transxylosylation activity to form cholesteryl 3-beta-D-xyloside. The polypeptide is Lysosomal acid glucosylceramidase (Homo sapiens (Human)).